We begin with the raw amino-acid sequence, 521 residues long: DNA damage-binding protein cmr1 (521 aa).

The disordered stretch occupies residues 36–75 (DKIIPKPAPPKPKRASTPRVKREPVKKEAARPTRQSSRLA). Over residues 55-66 (VKREPVKKEAAR) the composition is skewed to basic and acidic residues. 5 WD repeats span residues 183–224 (IVPQ…PKIE), 242–282 (THSR…STEI), 333–373 (LTDH…GKGD), 382–422 (EHES…EWKA), and 490–521 (DGIT…CLWM).

It belongs to the WD repeat DDB2/WDR76 family.

DNA-binding protein that binds to both single- and double-stranded DNA. Binds preferentially to UV-damaged DNA. May be involved in DNA-metabolic processes. The chain is DNA damage-binding protein cmr1 from Neurospora crassa (strain ATCC 24698 / 74-OR23-1A / CBS 708.71 / DSM 1257 / FGSC 987).